The chain runs to 309 residues: MPIRVPDELPAVNFLREENVFVMTTSRASGQEIRPLKVLILNLMPKKIETENQFLRLLSNSPLQVDIQLLRIDSRESRNTPAEHLNNFYCNFEDIQEQNFDGLIVTGAPLGLVEFNDVAYWPQIKQVLEWSKDHVTSTLFVCWAVQAALNILYGIPKQTRTDKLSGVYEHHILHPHALLTRGFDDSFLAPHSRYADFPAALIRDYTDLEILAETEEGDAYLFASKDKRIAFVTGHPEYDAQTLAQEFFRDVEAGLDPDVPYNYFPHNDPQNTPRASWRSHGNLLFTNWLNYYVYQITPYDLRHMNPTLD.

Catalysis depends on C142, which acts as the Acyl-thioester intermediate. Substrate-binding residues include K163 and S192. The Proton acceptor role is filled by H235. E237 is an active-site residue. R249 provides a ligand contact to substrate.

It belongs to the MetA family. In terms of assembly, homodimer.

Its subcellular location is the cytoplasm. It carries out the reaction L-homoserine + succinyl-CoA = O-succinyl-L-homoserine + CoA. It functions in the pathway amino-acid biosynthesis; L-methionine biosynthesis via de novo pathway; O-succinyl-L-homoserine from L-homoserine: step 1/1. Its function is as follows. Transfers a succinyl group from succinyl-CoA to L-homoserine, forming succinyl-L-homoserine. The protein is Homoserine O-succinyltransferase of Escherichia coli (strain SE11).